We begin with the raw amino-acid sequence, 286 residues long: P2R1A-PPP2R2A-interacting phosphatase regulator 1 (286 aa).

Positions 1–46 (MAQEKMELDLELPAGTGASPAEGGGPGSGGLRRSNSAPLIHGLSDS) are disordered. S34 is subject to Phosphoserine. The residue at position 36 (S36) is a Phosphoserine; by CHEK1. S44, S47, S61, and S75 each carry phosphoserine. K88 is covalently cross-linked (Glycyl lysine isopeptide (Lys-Gly) (interchain with G-Cter in SUMO1)). 2 positions are modified to phosphoserine: S142 and S146. T148 is modified (phosphothreonine). Positions 166–187 (SNGLPPSPIPSPTTRFTTRRSQ) are disordered. Over residues 177–187 (PTTRFTTRRSQ) the composition is skewed to low complexity. S186 and S188 each carry phosphoserine. Positions 238–286 (VSSDTLDGNSSSAGSSCNSPAKVSTTTDSPVSPAQAASPFIPVDELSSK) are disordered. The segment covering 245 to 256 (GNSSSAGSSCNS) has biased composition (low complexity). The segment covering 258-269 (AKVSTTTDSPVS) has biased composition (polar residues). A phosphoserine mark is found at S266, S269, and S275.

Belongs to the FAM122 family. Interacts with PPP2CA and PPP2R1A. Interacts (via its N-terminus) with PPP2R2A; the interaction is direct and this interaction inhibits PP2A activity. The CHEK1-mediated Ser-36 phosphorylated form interacts with 14-3-3 proteins. Post-translationally, CHEK1-mediated phosphorylation at Ser-36 negatively regulates its ability to inhibit serine/threonine-protein phosphatase 2A (PP2A) activity. Phosphorylation leads to its release from the PP2A complex and its sequestration by 14-3-3 proteins in the cytoplasm resulting in its inability to translocate to the nucleus, where it otherwise inhibits PP2A.

It is found in the nucleus. The protein localises to the cytoplasm. In terms of biological role, acts as an inhibitor of serine/threonine-protein phosphatase 2A (PP2A) activity. Inhibits PP2A activity by blocking the substrate binding site on PPP2R2A and the active site of PPP2CA. Potentiates ubiquitin-mediated proteasomal degradation of serine/threonine-protein phosphatase 2A catalytic subunit alpha (PPP2CA). Inhibits PP2A-mediated dephosphorylation of WEE1, promoting ubiquitin-mediated proteolysis of WEE1, thereby releasing G2/M checkpoint. The polypeptide is P2R1A-PPP2R2A-interacting phosphatase regulator 1 (Rattus norvegicus (Rat)).